The primary structure comprises 226 residues: Thiopurine S-methyltransferase (226 aa).

S-adenosyl-L-methionine-binding residues include W16, M51, E72, and R131.

Belongs to the class I-like SAM-binding methyltransferase superfamily. TPMT family.

The protein resides in the cytoplasm. The enzyme catalyses S-adenosyl-L-methionine + a thiopurine = S-adenosyl-L-homocysteine + a thiopurine S-methylether.. The polypeptide is Thiopurine S-methyltransferase (Francisella tularensis subsp. tularensis (strain SCHU S4 / Schu 4)).